The following is a 1209-amino-acid chain: Phospholipid-transporting ATPase ID (1209 aa).

Residues 1–12 (MTVPKEMPEKWA) are compositionally biased toward basic and acidic residues. The tract at residues 1-36 (MTVPKEMPEKWARAQAPPSWSRKKPSWGTEEERRAR) is disordered. Topologically, residues 1 to 64 (MTVPKEMPEK…TSKYNILTFL (64 aa)) are cytoplasmic. Residues 65–86 (PVNLFEQFQEVANTYFLFLLIL) traverse the membrane as a helical segment. The Exoplasmic loop segment spans residues 87–92 (QLIPQI). The chain crosses the membrane as a helical span at residues 93–112 (SSLSWFTTIVPLVLVLTITA). Residues 113 to 295 (VKDATDDYFR…TSIDRLMNTL (183 aa)) lie on the Cytoplasmic side of the membrane. The helical transmembrane segment at 296-317 (VLWIFGFLVCMGVILAIGNAIW) threads the bilayer. The Exoplasmic loop portion of the chain corresponds to 318–346 (EHEVGMRFQVYLPWDEAVDSAFFSGFLSF). A helical membrane pass occupies residues 347–368 (WSYIIILNTVVPISLYVSVEVI). Residues 369 to 889 (RLGHSYFINW…GRWSYLRMCK (521 aa)) are Cytoplasmic-facing. The active-site 4-aspartylphosphate intermediate is Asp411. Residues Asp411, Lys412, Thr413, Glu515, Phe556, Lys579, Arg613, Thr693, Gly694, Asp695, Arg807, and Lys813 each contribute to the ATP site. Residue Asp411 coordinates Mg(2+). Thr413 serves as a coordination point for Mg(2+). Asp833 contributes to the Mg(2+) binding site. Residues Asn836 and Asp837 each contribute to the ATP site. Residue Asp837 participates in Mg(2+) binding. A helical transmembrane segment spans residues 890-910 (FLCYFFYKNFAFTMVHFWFGF). Residues 911–922 (FCGFSAQTVYDQ) are Exoplasmic loop-facing. Residues 923 to 942 (YFITLYNIVYTSLPVLAMGV) traverse the membrane as a helical segment. Over 943–972 (FDQDVPEQRSMEYPKLYEPGQLNLLFNKRE) the chain is Cytoplasmic. The helical transmembrane segment at 973–994 (FFICIAQGIYTSVLMFFIPYGV) threads the bilayer. Topologically, residues 995 to 1008 (FADATRDDGTQLAD) are exoplasmic loop. The chain crosses the membrane as a helical span at residues 1009 to 1031 (YQSFAVTVATSLVIVVSVQIGLD). At 1032 to 1037 (TGYWTA) the chain is on the cytoplasmic side. The chain crosses the membrane as a helical span at residues 1038-1058 (INHFFIWGSLAVYFAILFAMH). Residues 1059 to 1078 (SNGLFDMFPNQFRFVGNAQN) are Exoplasmic loop-facing. Residues 1079 to 1103 (TLAQPTVWLTIVLTTVVCIMPVVAF) traverse the membrane as a helical segment. The Cytoplasmic portion of the chain corresponds to 1104–1209 (RFLRLNLKPD…SGGADKPLKG (106 aa)). Position 1175 is a phosphoserine (Ser1175). The interval 1181-1209 (SSSWIESLRRKKSDSASSPSGGADKPLKG) is disordered. Low complexity predominate over residues 1195 to 1209 (SASSPSGGADKPLKG).

This sequence belongs to the cation transport ATPase (P-type) (TC 3.A.3) family. Type IV subfamily. Component of a P4-ATPase flippase complex which consists of a catalytic alpha subunit ATP8B2 and an accessory beta subunit TMEM30A or TMEM30B. Requires Mg(2+) as cofactor. In terms of tissue distribution, isoform 3 is ubiquitous, with highest expression in aorta, cerebellum and uterus.

Its subcellular location is the cell membrane. The protein resides in the endoplasmic reticulum membrane. It carries out the reaction ATP + H2O + phospholipidSide 1 = ADP + phosphate + phospholipidSide 2.. The enzyme catalyses a 1,2-diacyl-sn-glycero-3-phosphocholine(out) + ATP + H2O = a 1,2-diacyl-sn-glycero-3-phosphocholine(in) + ADP + phosphate + H(+). In terms of biological role, catalytic component of P4-ATPase flippase complex, which catalyzes the hydrolysis of ATP coupled to the transport of phosphatidylcholine (PC) from the outer to the inner leaflet of the plasma membrane. May contribute to the maintenance of membrane lipid asymmetry. The chain is Phospholipid-transporting ATPase ID from Homo sapiens (Human).